We begin with the raw amino-acid sequence, 290 residues long: Lipid phosphate phosphatase 2 (290 aa).

3 consecutive transmembrane segments (helical) span residues 26–46 (WLIL…EPFH), 69–89 (WAVP…YYFI), and 93–113 (VYDL…TGVI). Asparagine 142 is a glycosylation site (N-linked (GlcNAc...) asparagine). Helical transmembrane passes span 162–182 (SFPS…SLYL), 193–213 (GHVA…LVGV), and 226–246 (VFGG…QFFP).

It belongs to the PA-phosphatase related phosphoesterase family. Expressed in roots, stems, leaves, buds, flowers and siliques.

Its subcellular location is the membrane. PA phosphatase activity not inhibited by N-ethylmaleimide. In terms of biological role, may play a general 'housekeeping role' in lipid metabolism. Exhibits both diacylglycerol pyrophosphate (DGPP) phosphatase and phosphatidate (PA) phosphatase activities with no preference for either substrate. May play a role downstream of the ABA signaling pathway during seed germination and in stomatal movement in leaves. This is Lipid phosphate phosphatase 2 (LPP2) from Arabidopsis thaliana (Mouse-ear cress).